Reading from the N-terminus, the 257-residue chain is Thiazole synthase (257 aa).

The active-site Schiff-base intermediate with DXP is K98. Residues G159, 185 to 186, and 207 to 208 contribute to the 1-deoxy-D-xylulose 5-phosphate site; these read AG and NT.

It belongs to the ThiG family. Homotetramer. Forms heterodimers with either ThiH or ThiS.

The protein resides in the cytoplasm. The enzyme catalyses [ThiS sulfur-carrier protein]-C-terminal-Gly-aminoethanethioate + 2-iminoacetate + 1-deoxy-D-xylulose 5-phosphate = [ThiS sulfur-carrier protein]-C-terminal Gly-Gly + 2-[(2R,5Z)-2-carboxy-4-methylthiazol-5(2H)-ylidene]ethyl phosphate + 2 H2O + H(+). It functions in the pathway cofactor biosynthesis; thiamine diphosphate biosynthesis. Its function is as follows. Catalyzes the rearrangement of 1-deoxy-D-xylulose 5-phosphate (DXP) to produce the thiazole phosphate moiety of thiamine. Sulfur is provided by the thiocarboxylate moiety of the carrier protein ThiS. In vitro, sulfur can be provided by H(2)S. This Anaeromyxobacter dehalogenans (strain 2CP-C) protein is Thiazole synthase.